Here is a 615-residue protein sequence, read N- to C-terminus: MDPGLKPSSSWTHKIVDSIIANRSQTAVQNFRRQPLANKLTALEDAIVQPRKDSTPDSIAAILQELVSMGALKPSEVGPMFSDLLIRVHKYNSTNVQSNLNVLLGDIRAAQSEAIRSTNVGELSNQVILNDFLSRLPPVVPMGQHNYEAFKQSLRLMVNEAPNVTLFKSGPDTMMQVNIRGVNTVNLNSAFSNLQNLWGVVLDSDRVPGSISSKLSSNTRVLLLFLAPFTNENTFTPDTFLWQIMQLYRETVAASIEAPLETEREVAETVRDMGGDIDDVGRTMAYLLKNKEEVMANPRTLSPRQLGVVRYVQESLMDRIDRNGEEPIDALRNIVFSFAPSYFEANGSFIRKLLSYLEVALRNSPNYFREIYSNKYWTPPPSFWTQNYGDFFVEREAEAEREALEEAGPRESYSFLEDPSSSPQSSKIQSLGTCGMTMLRPMSPSVPPTPSVRSAPPSVSYGGPSRSSLSVDSASNRNFGATLARAVLPSAAAAIGNAAGEALYPSLGQFLAPAASLAATRFLSGNRGERIKRQRQRRRAEIERRRIAELTPPSPAPSLSSESSAPSLSSVRTSYTPLAGAKYWNPVDDPEGDRDVSGTGLGNPFDYLRPRNGLK.

The tract at residues Met-1–Asn-92 is peripentonal hexon-tethering domain. The interval Ser-124–Asp-238 is binding to hexon-linking protein. Ser-212 is subject to Phosphoserine; by host. Thr-262 carries the phosphothreonine; by host modification. The segment covering Glu-400–Pro-409 has biased composition (basic and acidic residues). Disordered stretches follow at residues Glu-400–Ser-473 and Gly-528–Lys-615. Composition is skewed to low complexity over residues Pro-419–Ser-430 and Ser-451–Ser-460. Position 451 is a phosphoserine; by host (Ser-451). The segment covering Arg-539 to Ala-548 has biased composition (basic and acidic residues). Over residues Pro-557 to Ser-570 the composition is skewed to low complexity. Residues Gly-602–Lys-615 constitute a propeptide that is removed on maturation.

Belongs to the adenoviridae hexon-linking protein IIIa family. As to quaternary structure, interacts with hexon proteins; this interaction tethers the peripentonal hexons to hexons situated in the facet. Interacts with the penton protein (via N-terminus). Interacts with packaging protein 3; this interaction is required to promote correct genome packaging. Post-translationally, cleaved near the C-terminus by the viral protease during virion maturation to form the mature protein.

It is found in the virion. Its subcellular location is the host nucleus. Its function is as follows. Structural component of the virion that acts as a cement protein on the capsid exterior which mediates the interactions between the hexons, including the peripentonal hexons, and reaches all the way to the penton vertices. Two hexon linking proteins IIIa, one from each facet, stabilize the unique edge interface between a pair of facets. As the virus enters the host cell, hexon linking proteins IIIa are shed concomitant with virion acidification in the endosome. During virus assembly, seems to play a role in the serotype specificity of the packaging of viral DNA via its interaction with packaging protein 3. This Snake adenovirus serotype 1 (SnAdV-1) protein is Pre-hexon-linking protein IIIa.